We begin with the raw amino-acid sequence, 180 residues long: Nucleoside triphosphate/diphosphate phosphatase (180 aa).

Residue arginine 26 is the Proton donor of the active site. Positions 90, 106, 108, 110, 123, and 126 each coordinate Mg(2+).

This sequence belongs to the Ntdp family. It depends on Mg(2+) as a cofactor.

It catalyses the reaction a ribonucleoside 5'-triphosphate + H2O = a ribonucleoside 5'-diphosphate + phosphate + H(+). The enzyme catalyses a ribonucleoside 5'-diphosphate + H2O = a ribonucleoside 5'-phosphate + phosphate + H(+). Its function is as follows. Has nucleoside phosphatase activity towards nucleoside triphosphates and nucleoside diphosphates. In Staphylococcus aureus (strain MSSA476), this protein is Nucleoside triphosphate/diphosphate phosphatase.